The sequence spans 365 residues: Probable dual-specificity RNA methyltransferase RlmN (365 aa).

The active-site Proton acceptor is the Glu-108. Positions 114 to 347 (HNYGNSVCVT…VTIRREHGHD (234 aa)) constitute a Radical SAM core domain. A disulfide bond links Cys-121 and Cys-352. Residues Cys-128, Cys-132, and Cys-135 each coordinate [4Fe-4S] cluster. Residues 178 to 179 (GE), Ser-210, 233 to 235 (SLH), and Asn-309 each bind S-adenosyl-L-methionine. Catalysis depends on Cys-352, which acts as the S-methylcysteine intermediate.

The protein belongs to the radical SAM superfamily. RlmN family. The cofactor is [4Fe-4S] cluster.

Its subcellular location is the cytoplasm. It catalyses the reaction adenosine(2503) in 23S rRNA + 2 reduced [2Fe-2S]-[ferredoxin] + 2 S-adenosyl-L-methionine = 2-methyladenosine(2503) in 23S rRNA + 5'-deoxyadenosine + L-methionine + 2 oxidized [2Fe-2S]-[ferredoxin] + S-adenosyl-L-homocysteine. The catalysed reaction is adenosine(37) in tRNA + 2 reduced [2Fe-2S]-[ferredoxin] + 2 S-adenosyl-L-methionine = 2-methyladenosine(37) in tRNA + 5'-deoxyadenosine + L-methionine + 2 oxidized [2Fe-2S]-[ferredoxin] + S-adenosyl-L-homocysteine. Functionally, specifically methylates position 2 of adenine 2503 in 23S rRNA and position 2 of adenine 37 in tRNAs. This is Probable dual-specificity RNA methyltransferase RlmN from Geobacillus kaustophilus (strain HTA426).